A 270-amino-acid polypeptide reads, in one-letter code: MVRKILQKYGIRGGCHDQHFLIDERSLDSIVDQAELSEKDVVLEIGGGIGNLTERLLEKAGKVYVIELDPALVHVLKDRFSDNEKLEIIPGDVLKLDLPKFNKVVANLPYSISSPITFKLFKHEFELGILMYQYEFAQRMVAKANTENYSRLSVNTHYFADADIIMKIPPSAFSPPPEVWSAVVKVVPRPSSFHTEDPQFFLDLVTAVFLQRRKKLRNAIVKGNHLLNVPNIKQIVAELPEEFMSKRAENLEPHELAEIANFIFKMRSTS.

6 residues coordinate S-adenosyl-L-methionine: His-19, Leu-21, Gly-46, Glu-67, Asp-92, and Asn-107.

The protein belongs to the class I-like SAM-binding methyltransferase superfamily. rRNA adenine N(6)-methyltransferase family. RsmA subfamily.

The protein localises to the cytoplasm. Its function is as follows. Specifically dimethylates two adjacent adenosines in the loop of a conserved hairpin near the 3'-end of 16S rRNA in the 30S particle. May play a critical role in biogenesis of 30S subunits. This chain is Probable ribosomal RNA small subunit methyltransferase A, found in Methanococcoides burtonii (strain DSM 6242 / NBRC 107633 / OCM 468 / ACE-M).